A 470-amino-acid chain; its full sequence is Glutamyl-tRNA(Gln) amidotransferase subunit A (470 aa).

Catalysis depends on charge relay system residues K71 and S146. S170 functions as the Acyl-ester intermediate in the catalytic mechanism.

This sequence belongs to the amidase family. GatA subfamily. Heterotrimer of A, B and C subunits.

The catalysed reaction is L-glutamyl-tRNA(Gln) + L-glutamine + ATP + H2O = L-glutaminyl-tRNA(Gln) + L-glutamate + ADP + phosphate + H(+). Its function is as follows. Allows the formation of correctly charged Gln-tRNA(Gln) through the transamidation of misacylated Glu-tRNA(Gln) in organisms which lack glutaminyl-tRNA synthetase. The reaction takes place in the presence of glutamine and ATP through an activated gamma-phospho-Glu-tRNA(Gln). The polypeptide is Glutamyl-tRNA(Gln) amidotransferase subunit A (Akkermansia muciniphila (strain ATCC BAA-835 / DSM 22959 / JCM 33894 / BCRC 81048 / CCUG 64013 / CIP 107961 / Muc)).